A 388-amino-acid polypeptide reads, in one-letter code: MATTPMTVVDHEAEEAVAKAREDDKSRQVDAFDAGKPPPFRIGDVRAAVPEHCWHKSPWRSLWYVVRDVAAVVALGTAAAAMDSWAVWPVYWAVQGTMFWAFFVLGHDCGHGSFSDSRTLNSVVGHLLHSFILIPYHGWRISHRTHHQNHGHVDRDESWHPITEGRYRRLPPRAKKIRFTAPYPLLLFPLYLFYRGPDKPGTHFLPSSELFSPKEKGDVMLSTTCWCIMLASLLAMSCAFGPLQVLKMYGLPYLVFVMWLDLVTYLHHHGHHERLPWYRGEEWSYLRGGLTTVDRDYGWINKIHHDIGTHVIHHLFPQIPHYHLVEATKAAKPVLGRYYREPQKSGPLPLPLLGVFLRSIRVNHFVSDHGDVVYYQTDHHLNDTTKQK.

The disordered stretch occupies residues 1–33 (MATTPMTVVDHEAEEAVAKAREDDKSRQVDAFD). Residues 9-30 (VDHEAEEAVAKAREDDKSRQVD) are compositionally biased toward basic and acidic residues. 2 consecutive transmembrane segments (helical) span residues 62–82 (LWYVVRDVAAVVALGTAAAAM) and 85–105 (WAVWPVYWAVQGTMFWAFFVL). Residues 107–111 (HDCGH) carry the Histidine box-1 motif. A helical transmembrane segment spans residues 119 to 139 (TLNSVVGHLLHSFILIPYHGW). A Histidine box-2 motif is present at residues 143 to 147 (HRTHH). 3 helical membrane passes run 177-194 (IRFTAPYPLLLFPLYLFY), 226-246 (WCIMLASLLAMSCAFGPLQVL), and 248-268 (MYGLPYLVFVMWLDLVTYLHH). The Histidine box-3 signature appears at 310-314 (HVIHH).

This sequence belongs to the fatty acid desaturase type 1 family. Highly expressed in root hair cells. Barely detected in panicle, shoot apex, stems and leaves.

The protein resides in the membrane. The protein operates within lipid metabolism; polyunsaturated fatty acid biosynthesis. The sequence is that of Probable fatty acid desaturase DES1 from Sorghum bicolor (Sorghum).